Here is a 305-residue protein sequence, read N- to C-terminus: Serine/threonine-protein phosphatase 4 catalytic subunit (305 aa).

D52, H54, D80, and N112 together coordinate Mn(2+). H113 acts as the Proton donor in catalysis. The Mn(2+) site is built by H162 and H236.

Belongs to the PPP phosphatase family. PP-4 (PP-X) subfamily. As to quaternary structure, serine/threonine-protein phosphatase 4 (PP4) occurs in different assemblies of the catalytic and one or more regulatory subunits. Probably part of a PP4 complex containing ppp4c and ppp4r2. Interacts with smkA. Requires Mn(2+) as cofactor.

It is found in the cytoplasm. Its subcellular location is the nucleus. It carries out the reaction O-phospho-L-seryl-[protein] + H2O = L-seryl-[protein] + phosphate. The catalysed reaction is O-phospho-L-threonyl-[protein] + H2O = L-threonyl-[protein] + phosphate. Functionally, required for development, chemotaxis and the expression of numerous genes. This Dictyostelium discoideum (Social amoeba) protein is Serine/threonine-protein phosphatase 4 catalytic subunit (ppp4c).